A 101-amino-acid chain; its full sequence is Large ribosomal subunit protein bL21 (101 aa).

It belongs to the bacterial ribosomal protein bL21 family. As to quaternary structure, part of the 50S ribosomal subunit. Contacts protein L20.

Its function is as follows. This protein binds to 23S rRNA in the presence of protein L20. The chain is Large ribosomal subunit protein bL21 from Corynebacterium diphtheriae (strain ATCC 700971 / NCTC 13129 / Biotype gravis).